Reading from the N-terminus, the 139-residue chain is Large ribosomal subunit protein bL20 (139 aa).

This sequence belongs to the bacterial ribosomal protein bL20 family.

Its function is as follows. Binds directly to 23S ribosomal RNA and is necessary for the in vitro assembly process of the 50S ribosomal subunit. It is not involved in the protein synthesizing functions of that subunit. In Leuconostoc citreum (strain KM20), this protein is Large ribosomal subunit protein bL20.